The sequence spans 178 residues: ATP synthase subunit delta (178 aa).

The protein belongs to the ATPase delta chain family. In terms of assembly, F-type ATPases have 2 components, F(1) - the catalytic core - and F(0) - the membrane proton channel. F(1) has five subunits: alpha(3), beta(3), gamma(1), delta(1), epsilon(1). F(0) has three main subunits: a(1), b(2) and c(10-14). The alpha and beta chains form an alternating ring which encloses part of the gamma chain. F(1) is attached to F(0) by a central stalk formed by the gamma and epsilon chains, while a peripheral stalk is formed by the delta and b chains.

It is found in the cell inner membrane. Its function is as follows. F(1)F(0) ATP synthase produces ATP from ADP in the presence of a proton or sodium gradient. F-type ATPases consist of two structural domains, F(1) containing the extramembraneous catalytic core and F(0) containing the membrane proton channel, linked together by a central stalk and a peripheral stalk. During catalysis, ATP synthesis in the catalytic domain of F(1) is coupled via a rotary mechanism of the central stalk subunits to proton translocation. In terms of biological role, this protein is part of the stalk that links CF(0) to CF(1). It either transmits conformational changes from CF(0) to CF(1) or is implicated in proton conduction. This chain is ATP synthase subunit delta, found in Polynucleobacter necessarius subsp. necessarius (strain STIR1).